The following is a 462-amino-acid chain: Argininosuccinate lyase (462 aa).

Belongs to the lyase 1 family. Argininosuccinate lyase subfamily.

The protein localises to the cytoplasm. It carries out the reaction 2-(N(omega)-L-arginino)succinate = fumarate + L-arginine. It functions in the pathway amino-acid biosynthesis; L-arginine biosynthesis; L-arginine from L-ornithine and carbamoyl phosphate: step 3/3. In Nitratiruptor sp. (strain SB155-2), this protein is Argininosuccinate lyase.